Here is a 221-residue protein sequence, read N- to C-terminus: Membrane protein 0 (221 aa).

The segment at M1–G22 is disordered. Positions P44–Y47 match the PPXY motif motif. A helical membrane pass occupies residues F100–F120.

The protein belongs to the varicellovirus ORF0 protein family. As to quaternary structure, interacts with host ITCH; this interaction probably mediates ITCH degradation.

The protein localises to the host Golgi apparatus membrane. The sequence is that of Membrane protein 0 from Homo sapiens (Human).